The chain runs to 819 residues: Outer membrane usher protein CssD (819 aa).

This sequence belongs to the fimbrial export usher family.

The protein localises to the cell outer membrane. Involved in the export and assembly of C6 fimbrial subunits across the outer membrane. The polypeptide is Outer membrane usher protein CssD (cssD) (Escherichia coli).